Consider the following 906-residue polypeptide: Protein translocase subunit SecA (906 aa).

ATP contacts are provided by residues Gln89, 107-111 (GEGKT), and Asp502. The segment at 829-898 (EAPPEPELPP…ACPCGSGKKY (70 aa)) is disordered. The segment covering 858–877 (WSDHQHDERNVPAAERDPAD) has biased composition (basic and acidic residues). Residues Cys890, Cys892, Cys901, and His902 each coordinate Zn(2+).

This sequence belongs to the SecA family. As to quaternary structure, monomer and homodimer. Part of the essential Sec protein translocation apparatus which comprises SecA, SecYEG and auxiliary proteins SecDF-YajC and YidC. Requires Zn(2+) as cofactor.

It is found in the cell inner membrane. It localises to the cytoplasm. It catalyses the reaction ATP + H2O + cellular proteinSide 1 = ADP + phosphate + cellular proteinSide 2.. Its function is as follows. Part of the Sec protein translocase complex. Interacts with the SecYEG preprotein conducting channel. Has a central role in coupling the hydrolysis of ATP to the transfer of proteins into and across the cell membrane, serving both as a receptor for the preprotein-SecB complex and as an ATP-driven molecular motor driving the stepwise translocation of polypeptide chains across the membrane. The sequence is that of Protein translocase subunit SecA from Brucella anthropi (strain ATCC 49188 / DSM 6882 / CCUG 24695 / JCM 21032 / LMG 3331 / NBRC 15819 / NCTC 12168 / Alc 37) (Ochrobactrum anthropi).